Consider the following 298-residue polypeptide: Arginine/serine-rich protein 1 (298 aa).

Residues 1–135 form a disordered region; it reads MSSAAMSKYV…SRSRSRGRSQ (135 aa). A Phosphoserine modification is found at serine 17. Low complexity predominate over residues 23-36; the sequence is SPSTSGSGRSSRLS. Residues 60 to 105 show a composition bias toward basic residues; it reads SRSHSRPRRSRRSRSRSRRRHQRKYRRYSRSYSRSRSRSRSHRYHR. Serine 118 and serine 120 each carry phosphoserine. The segment covering 124–135 has biased composition (basic residues); the sequence is SRSRSRSRGRSQ. Arginine 145 carries the omega-N-methylarginine modification. Disordered stretches follow at residues 161 to 181 and 218 to 298; these read RPRW…TPFR and ASQG…WIPV. Polar residues predominate over residues 219–228; it reads SQGTAVSSSG. Positions 230 to 246 are enriched in basic and acidic residues; the sequence is KVEHSEKQTEDATKNTS. Over residues 247 to 271 the composition is skewed to polar residues; the sequence is EKSSTQRNIAFSSNNSVAKPLQKTT. Residues 274–289 show a composition bias toward basic and acidic residues; sequence AVEEKSSGSPKIDKKK. A Phosphoserine modification is found at serine 282.

This sequence belongs to the RSRP family. Post-translationally, phosphorylated. Phosphorylation at Ser-118 and Ser-120 mediates the interaction with spliceosome proteins.

The protein resides in the nucleus. Probably acts as a spliceosomal factor that contributes to spliceosome assembly and regulates the isoform switching of proteins such as PARP6. In Mus musculus (Mouse), this protein is Arginine/serine-rich protein 1 (Rsrp1).